Here is a 354-residue protein sequence, read N- to C-terminus: Neuronal growth regulator 1 (354 aa).

Positions M1–S37 are cleaved as a signal peptide. Ig-like C2-type domains are found at residues V38–T134, P139–V221, and P225–N313. C60 and C118 are oxidised to a cystine. N-linked (GlcNAc...) asparagine glycans are attached at residues N73 and N155. Disulfide bonds link C160–C203 and C245–C297. Y187 carries the phosphotyrosine modification. N275, N286, N294, and N307 each carry an N-linked (GlcNAc...) asparagine glycan. A lipid anchor (GPI-anchor amidated glycine) is attached at G324. Positions S325 to Q354 are cleaved as a propeptide — removed in mature form.

It belongs to the immunoglobulin superfamily. IgLON family.

It is found in the cell membrane. May be involved in cell-adhesion. May function as a trans-neural growth-promoting factor in regenerative axon sprouting in the mammalian brain. In Pongo abelii (Sumatran orangutan), this protein is Neuronal growth regulator 1 (NEGR1).